A 323-amino-acid chain; its full sequence is Dihydrodiol dehydrogenase 3 (323 aa).

Residues 20 to 24 (GFGTF) and Asp-50 each bind NADP(+). Tyr-55 (proton donor) is an active-site residue. Position 117 (His-117) interacts with substrate. Residues 166–167 (SN), Gln-190, 216–221 (YGALGS), and 270–280 (KSYNKKRIKEN) each bind NADP(+).

The protein belongs to the aldo/keto reductase family.

It is found in the cytoplasm. The chain is Dihydrodiol dehydrogenase 3 from Bos taurus (Bovine).